A 983-amino-acid polypeptide reads, in one-letter code: Glycine dehydrogenase (decarboxylating) (983 aa).

Lys731 is modified (N6-(pyridoxal phosphate)lysine).

Belongs to the GcvP family. The glycine cleavage system is composed of four proteins: P, T, L and H. The cofactor is pyridoxal 5'-phosphate.

It carries out the reaction N(6)-[(R)-lipoyl]-L-lysyl-[glycine-cleavage complex H protein] + glycine + H(+) = N(6)-[(R)-S(8)-aminomethyldihydrolipoyl]-L-lysyl-[glycine-cleavage complex H protein] + CO2. The glycine cleavage system catalyzes the degradation of glycine. The P protein binds the alpha-amino group of glycine through its pyridoxal phosphate cofactor; CO(2) is released and the remaining methylamine moiety is then transferred to the lipoamide cofactor of the H protein. In Nostoc sp. (strain PCC 7120 / SAG 25.82 / UTEX 2576), this protein is Glycine dehydrogenase (decarboxylating).